Reading from the N-terminus, the 146-residue chain is Acidic phospholipase A2 S13-69J (146 aa).

A signal peptide spans 1–19 (MYPAHLLVLLAVCVSLLGA). The propeptide occupies 20-27 (ASIPPQPL). 7 disulfides stabilise this stretch: cysteine 38-cysteine 98, cysteine 54-cysteine 145, cysteine 56-cysteine 72, cysteine 71-cysteine 126, cysteine 78-cysteine 119, cysteine 87-cysteine 112, and cysteine 105-cysteine 117. Ca(2+) is bound by residues tyrosine 55, glycine 57, and glycine 59. Residue histidine 75 is part of the active site. Position 76 (aspartate 76) interacts with Ca(2+). Residue aspartate 120 is part of the active site.

The protein belongs to the phospholipase A2 family. Group I subfamily. D49 sub-subfamily. The cofactor is Ca(2+). Expressed by the venom gland.

The protein localises to the secreted. The catalysed reaction is a 1,2-diacyl-sn-glycero-3-phosphocholine + H2O = a 1-acyl-sn-glycero-3-phosphocholine + a fatty acid + H(+). Functionally, snake venom phospholipase A2 (PLA2) that inhibits collagen-induced platelet aggregation. PLA2 catalyzes the calcium-dependent hydrolysis of the 2-acyl groups in 3-sn-phosphoglycerides. In Austrelaps superbus (Lowland copperhead snake), this protein is Acidic phospholipase A2 S13-69J.